We begin with the raw amino-acid sequence, 582 residues long: Probable DNA ligase (582 aa).

Glutamate 243 is a binding site for ATP. Catalysis depends on lysine 245, which acts as the N6-AMP-lysine intermediate. The ATP site is built by arginine 250, arginine 265, glutamate 295, phenylalanine 335, arginine 410, and lysine 416.

It belongs to the ATP-dependent DNA ligase family. Requires Mg(2+) as cofactor.

It carries out the reaction ATP + (deoxyribonucleotide)n-3'-hydroxyl + 5'-phospho-(deoxyribonucleotide)m = (deoxyribonucleotide)n+m + AMP + diphosphate.. In terms of biological role, DNA ligase that seals nicks in double-stranded DNA during DNA replication, DNA recombination and DNA repair. This Dictyoglomus turgidum (strain DSM 6724 / Z-1310) protein is Probable DNA ligase.